The following is a 226-amino-acid chain: 2-C-methyl-D-erythritol 4-phosphate cytidylyltransferase (226 aa).

Belongs to the IspD/TarI cytidylyltransferase family. IspD subfamily.

It carries out the reaction 2-C-methyl-D-erythritol 4-phosphate + CTP + H(+) = 4-CDP-2-C-methyl-D-erythritol + diphosphate. It functions in the pathway isoprenoid biosynthesis; isopentenyl diphosphate biosynthesis via DXP pathway; isopentenyl diphosphate from 1-deoxy-D-xylulose 5-phosphate: step 2/6. Functionally, catalyzes the formation of 4-diphosphocytidyl-2-C-methyl-D-erythritol from CTP and 2-C-methyl-D-erythritol 4-phosphate (MEP). The sequence is that of 2-C-methyl-D-erythritol 4-phosphate cytidylyltransferase from Synechococcus sp. (strain CC9902).